The primary structure comprises 175 residues: Large ribosomal subunit protein uL10 (175 aa).

Belongs to the universal ribosomal protein uL10 family. In terms of assembly, part of the ribosomal stalk of the 50S ribosomal subunit. The N-terminus interacts with L11 and the large rRNA to form the base of the stalk. The C-terminus forms an elongated spine to which L12 dimers bind in a sequential fashion forming a multimeric L10(L12)X complex.

Its function is as follows. Forms part of the ribosomal stalk, playing a central role in the interaction of the ribosome with GTP-bound translation factors. The protein is Large ribosomal subunit protein uL10 of Thermobifida fusca (strain YX).